The primary structure comprises 563 residues: Putative cysteine ligase BshC (563 aa).

The protein belongs to the BshC family.

In Chlorobium phaeobacteroides (strain BS1), this protein is Putative cysteine ligase BshC.